The primary structure comprises 157 residues: Transcriptional repressor NrdR (157 aa).

The interval 1-21 is disordered; the sequence is MKCPHCGNNGSRVVDSRPTDE. Residues 3–34 fold into a zinc finger; sequence CPHCGNNGSRVVDSRPTDEGRVIRRRRECEKC. The ATP-cone domain maps to 49–139; the sequence is LLVIKKNGSR…VYRQFKDMHV (91 aa).

The protein belongs to the NrdR family. It depends on Zn(2+) as a cofactor.

Its function is as follows. Negatively regulates transcription of bacterial ribonucleotide reductase nrd genes and operons by binding to NrdR-boxes. This chain is Transcriptional repressor NrdR, found in Pediococcus pentosaceus (strain ATCC 25745 / CCUG 21536 / LMG 10740 / 183-1w).